A 358-amino-acid chain; its full sequence is Probable D-xylulose reductase A (358 aa).

Zn(2+) is bound by residues Cys-47, His-72, and Glu-73. NAD(+) is bound at residue 182–187 (GAGPVG).

This sequence belongs to the zinc-containing alcohol dehydrogenase family. Requires Zn(2+) as cofactor.

The catalysed reaction is xylitol + NAD(+) = D-xylulose + NADH + H(+). The protein operates within carbohydrate degradation; L-arabinose degradation via L-arabinitol; D-xylulose 5-phosphate from L-arabinose (fungal route): step 4/5. Its function is as follows. Xylitol dehydrogenase which catalyzes the conversion of xylitol to D-xylulose. Xylose is a major component of hemicelluloses such as xylan. Most fungi utilize D-xylose via three enzymatic reactions, xylose reductase (XR), xylitol dehydrogenase (XDH), and xylulokinase, to form xylulose 5-phosphate, which enters pentose phosphate pathway. The sequence is that of Probable D-xylulose reductase A (xdhA) from Aspergillus niger (strain ATCC MYA-4892 / CBS 513.88 / FGSC A1513).